A 323-amino-acid chain; its full sequence is MDEKGRSLKNNNMEDEMDLKRGPWTAEEDFKLMNYIATNGEGRWNSLSRCAGLQRTGKSCRLRWLNYLRPDVRRGNITLEEQLLILELHSRWGNRWSKIAQYLPGRTDNEIKNYWRTRVQKHAKQLKCDVNSQQFKDTMKYLWMPRLVERIQSASASSAAAATTTTTTTTGSAGTSSCITTSNNQFMNYDYNNNNMGQQFGVMSNNDYITPENSSVAVSPASDLTEYYSAPNPNPEYYSGQMGNSYYPDQNLVSSQLLPDNYFDYSGLLDEDLTAMQEQSNLSWFENINGAASSSDSLWNIGETDEEFWFLQQQQQFNNNGSF.

HTH myb-type domains are found at residues 16-68 (EMDL…LNYL) and 69-123 (RPDV…QKHA). DNA-binding regions (H-T-H motif) lie at residues 44–68 (WNSL…LNYL) and 96–119 (WSKI…RTRV).

Interacts with BOI, but not with BRG1. In terms of processing, ubiquitinated in vitro by BOI. Expressed specifically in flowers. Restricted to anthers in maturing flowers. Strongest expression in the vascular and connective tissue where the anther attaches to the filament. Not detected in pollen.

It localises to the nucleus. Its function is as follows. Transcription factor contributing to the regulation of stamen maturation and male fertility in response to jasmonate signaling. Required for correct timing of anther dehiscence. Acts as a negative regulator of abscisic acid-induced cell death. Not involved in the regulation of BOI. Regulated by MYB21 and at a lower level by MYB24. Negatively regulated by the proteasome in an SCF(COI1) E3 ubiquitin-protein ligase complex-dependent manner. The polypeptide is Transcription factor MYB108 (MYB108) (Arabidopsis thaliana (Mouse-ear cress)).